The following is a 523-amino-acid chain: Probable lipid II flippase MurJ (523 aa).

A run of 12 helical transmembrane segments spans residues 98-118, 146-166, 170-190, 201-221, 246-266, 284-304, 328-348, 360-380, 395-415, 422-442, 461-481, and 489-509; these read AFYS…IVYV, IMFG…ILNA, FGLP…FTFM, GLAW…AVAL, MLPG…NLYF, LLEL…LPTL, LFLA…IIEV, VQMT…VSCS, VPMV…PVLM, GLMI…MGLL, FVLA…LMAQ, and LALF…AYVL.

This sequence belongs to the MurJ/MviN family.

It localises to the cell inner membrane. Its pathway is cell wall biogenesis; peptidoglycan biosynthesis. Involved in peptidoglycan biosynthesis. Transports lipid-linked peptidoglycan precursors from the inner to the outer leaflet of the cytoplasmic membrane. This chain is Probable lipid II flippase MurJ, found in Bdellovibrio bacteriovorus (strain ATCC 15356 / DSM 50701 / NCIMB 9529 / HD100).